The sequence spans 284 residues: MALGDLLSRSSPDQLTRFLAQVHGHPKKGLSQNFLIDGNILRKILAVSCVEAGDWVLEIGPGFGALTEVLVNQGAHVVALEKDPMFEETLKQLPIDLEITDACKYPLSQLQEKGWQGKGRVVANLPYHITTPLLTKLFLEVPNQWKTITVMMQDEVARRITAQPGGKEYGSLTIFLQFFADVRYAFKVSSGCFFPKPQVSSAVVHMTVKDTFPLEESLHKKFFSLTRAAFGQRRKLLANALKNLYPKDLVFSALNQLNFSEKTRPETLSLDEYLKLFQLLSLNS.

Residues N33, L35, G60, E81, D101, and N124 each coordinate S-adenosyl-L-methionine.

Belongs to the class I-like SAM-binding methyltransferase superfamily. rRNA adenine N(6)-methyltransferase family. RsmA subfamily.

It localises to the cytoplasm. The catalysed reaction is adenosine(1518)/adenosine(1519) in 16S rRNA + 4 S-adenosyl-L-methionine = N(6)-dimethyladenosine(1518)/N(6)-dimethyladenosine(1519) in 16S rRNA + 4 S-adenosyl-L-homocysteine + 4 H(+). In terms of biological role, specifically dimethylates two adjacent adenosines (A1518 and A1519) in the loop of a conserved hairpin near the 3'-end of 16S rRNA in the 30S particle. May play a critical role in biogenesis of 30S subunits. The sequence is that of Ribosomal RNA small subunit methyltransferase A from Chlamydia felis (strain Fe/C-56) (Chlamydophila felis).